The sequence spans 106 residues: L-rhamnose mutarotase (106 aa).

A substrate-binding site is contributed by tyrosine 20. Histidine 24 functions as the Proton donor in the catalytic mechanism. Substrate contacts are provided by residues tyrosine 43 and 78 to 79 (WW).

The protein belongs to the rhamnose mutarotase family. In terms of assembly, homodimer.

It localises to the cytoplasm. It catalyses the reaction alpha-L-rhamnose = beta-L-rhamnose. It functions in the pathway carbohydrate metabolism; L-rhamnose metabolism. In terms of biological role, involved in the anomeric conversion of L-rhamnose. The protein is L-rhamnose mutarotase of Verminephrobacter eiseniae (strain EF01-2).